Reading from the N-terminus, the 358-residue chain is Peptide chain release factor 1 (358 aa).

Q234 carries the post-translational modification N5-methylglutamine.

This sequence belongs to the prokaryotic/mitochondrial release factor family. In terms of processing, methylated by PrmC. Methylation increases the termination efficiency of RF1.

It is found in the cytoplasm. In terms of biological role, peptide chain release factor 1 directs the termination of translation in response to the peptide chain termination codons UAG and UAA. In Chloroherpeton thalassium (strain ATCC 35110 / GB-78), this protein is Peptide chain release factor 1.